A 574-amino-acid polypeptide reads, in one-letter code: MAPHKSDDVDAEAELASQLAADVAAAESSAATKAKASSASSSSTPAAERQPFSILDLSEPTRKAIDAMGFKTMTEVQARCIPPLMAGKDVLGAAQTGSGKTLSFLIPAIEMLHRLKFKPRNGTGAIIISPTRELALQIFGVAKELMAHHHQTFGIIMGGANRRAEADKLQKGVNLIVATPGRLLDHLQNTKGFVFSNLKALCIDEADRILEIGFEDEMRQIVKILPNDNRQSMLFSATQTTKVQDLARISLRPGPLYINVHADLAASTVSRLEQGYVVCESDRRFLLLFTFLKKNAGKKIIVFMSSCNSVKYHSDLLNFIDVPVLDLHGKQKQQKRTNTFFEYCNAPCGTLLCTDVAARGLDIPSVDWIIQFDPPDDPRDYIHRVGRTARAGNSGKSLLFLLPTELGFLRFLKVAKVPLNEYTFPSDKVANVQGQLEKLISKNYYLHQSARDGYRSYLQAYGSYSLKRIFDIHKLDLAKVAKAYGFSVPPKVNITIGTGLKTSASSSSGSGGKRKEVDVDGEGEDADGEINPKRQQSDRRAYYRKNHQNGGSKDHFRKSGANATGNKGGKQWSR.

The segment covering 31–47 (ATKAKASSASSSSTPAA) has biased composition (low complexity). The segment at 31-53 (ATKAKASSASSSSTPAAERQPFS) is disordered. The Q motif motif lies at 50 to 78 (QPFSILDLSEPTRKAIDAMGFKTMTEVQA). The Helicase ATP-binding domain maps to 81-257 (IPPLMAGKDV…RISLRPGPLY (177 aa)). Residue 94–101 (AQTGSGKT) participates in ATP binding. Residues 204 to 207 (DEAD) carry the DEAD box motif. The Helicase C-terminal domain maps to 271–440 (RLEQGYVVCE…NVQGQLEKLI (170 aa)). The Bipartite nuclear localization signal motif lies at 283–299 (RRFLLLFTFLKKNAGKK). Positions 500–574 (LKTSASSSSG…GNKGGKQWSR (75 aa)) are disordered. Residues 519–528 (VDGEGEDADG) show a composition bias toward acidic residues. Over residues 530–541 (INPKRQQSDRRA) the composition is skewed to basic and acidic residues.

Belongs to the DEAD box helicase family. DDX18/HAS1 subfamily. Associates in the nucleolus with the 60S and pre-60S ribosomal subunits.

It is found in the nucleus. The protein resides in the nucleolus. The catalysed reaction is ATP + H2O = ADP + phosphate + H(+). Functionally, ATP-dependent RNA helicase involved in 40S ribosomal subunit biogenesis. Required for the processing and cleavage of 35S pre-rRNA at sites A0, A1, and A2, leading to mature 18S rRNA. This chain is ATP-dependent RNA helicase HAS1 (HAS1), found in Mycosarcoma maydis (Corn smut fungus).